We begin with the raw amino-acid sequence, 637 residues long: Probable potassium transport system protein Kup 2 (637 aa).

The next 12 membrane-spanning stretches (helical) occupy residues 18–38 (FLVLLLGSIGVVYGDIGTSPL), 61–81 (LISLMIWTLTIIVTFKYVLFL), 107–127 (MPVLFFAGLIGSALFIGDAMI), 145–165 (PAFSDYVLPLSALIMVGLFAV), 174–194 (AVFFGPITVVWFLAMAWGGLI), 211–231 (ALWFITHAGWAGLIVLGAVFL), 255–275 (WFILVFPALALNYLGQGALVL), 293–313 (ALFPMIILATMATVIASQAVI), 345–365 (IYVPAVNMVLFIGVLVLIFSF), 371–391 (LATAYGISVTGAMVVTTLMAF), 402–422 (AFTAAILLAPLFSIEAVFLAA), and 429–449 (DGGWVPLALAGVIILVMWTWT).

It belongs to the HAK/KUP transporter (TC 2.A.72) family.

The protein localises to the cell inner membrane. It carries out the reaction K(+)(in) + H(+)(in) = K(+)(out) + H(+)(out). In terms of biological role, transport of potassium into the cell. Likely operates as a K(+):H(+) symporter. This Agrobacterium fabrum (strain C58 / ATCC 33970) (Agrobacterium tumefaciens (strain C58)) protein is Probable potassium transport system protein Kup 2.